A 716-amino-acid polypeptide reads, in one-letter code: Astellifadiene synthase (716 aa).

A terpene cyclase region spans residues 1–323 (MEFKYSTLID…SPRYYTDAKF (323 aa)). Asp92 contributes to the Mg(2+) binding site. Substrate-binding positions include Asp92, 179 to 182 (RIYD), Asn223, 227 to 231 (SWEKE), and 316 to 317 (RY). The short motif at 92 to 96 (DDVID) is the DDXXD 1 element. The short motif at 223 to 231 (NDLVSWEKE) is the NSE/DTE element. Positions 324–713 (SQRQLDWIKN…FQLKLILQFL (390 aa)) are prenyltransferase. Residues Lys436, Arg439, and His468 each coordinate isopentenyl diphosphate. 2 residues coordinate Mg(2+): Asp475 and Asp479. The short motif at 475-479 (DDVED) is the DDXXD 2 element. Residue Arg484 participates in dimethylallyl diphosphate binding. Residue Arg485 participates in isopentenyl diphosphate binding. The dimethylallyl diphosphate site is built by Lys562, Thr563, Gln598, Asn605, Lys615, and Lys625.

The protein in the N-terminal section; belongs to the terpene synthase family. In the C-terminal section; belongs to the FPP/GGPP synthase family. Hexamer. Mg(2+) serves as cofactor.

It catalyses the reaction isopentenyl diphosphate + (2E,6E)-farnesyl diphosphate = (2E,6E,10E)-geranylgeranyl diphosphate + diphosphate. The enzyme catalyses isopentenyl diphosphate + (2E,6E,10E)-geranylgeranyl diphosphate = (2E,6E,10E,14E)-geranylfarnesyl diphosphate + diphosphate. The catalysed reaction is (2E,6E,10E,14E)-geranylfarnesyl diphosphate = astellifadiene + diphosphate. Its pathway is secondary metabolite biosynthesis; terpenoid biosynthesis. Bifunctional terpene synthase that converts dimethylallyl diphosphate (DMAPP) and isopentenyl diphosphate (IPP) into astellifadiene. The C-terminal prenyltransferase (PT) domain of EvAS catalyzes formation of geranylfarnesyl pyrophosphate (GFPP), whereas the N-terminal terpene cyclase (TC) domain catalyzes the cyclization of GFPP to astellifadiene. The polypeptide is Astellifadiene synthase (Emericella variicolor (Aspergillus stellatus)).